The primary structure comprises 440 residues: MSTATPKVGFVSLGCPKATVDSERILTQLRMEGYEIVPTYQDADVVVVNTCGFIDSAKAESLDAIGEAIAENGKVIVTGCMGVAEDSIRDVHPSVLAVTGPQQYEQVVSAVHEVVPPKTEHNPLIDLVPPQGIKLTPRHYAYLKISEGCNHSCSFCIIPSMRGKLVSRPVGDVLSEAERLVKAGVKELLVISQDTSAYGVDMKYKLDFWNGQPVKTRMLELCEALSSMGVWVRLHYVYPYPNVDDVIPLMAAGKLLPYLDIPFQHASPKVLKSMKRPAFEDKTLARIKKWREICPELTIRSTFIVGFPGETEEDFQYLLDWLTEAQLDRVGCFQYSPVEGAPANDLGLEPVPDDVKQERWERFMAHQQAISSARLQAKIGLEMDVLVDEVDGEGAVARSWADAPEIDGSVFIDSTAVKPGDKVRVRIVDADEYDMWGELV.

Residues Pro6–Pro116 enclose the MTTase N-terminal domain. Cys15, Cys51, Cys80, Cys149, Cys153, and Cys156 together coordinate [4Fe-4S] cluster. The Radical SAM core domain occupies Leu135 to Arg374. The region spanning Gln376 to Val440 is the TRAM domain.

Belongs to the methylthiotransferase family. RimO subfamily. [4Fe-4S] cluster serves as cofactor.

The protein resides in the cytoplasm. It carries out the reaction L-aspartate(89)-[ribosomal protein uS12]-hydrogen + (sulfur carrier)-SH + AH2 + 2 S-adenosyl-L-methionine = 3-methylsulfanyl-L-aspartate(89)-[ribosomal protein uS12]-hydrogen + (sulfur carrier)-H + 5'-deoxyadenosine + L-methionine + A + S-adenosyl-L-homocysteine + 2 H(+). Functionally, catalyzes the methylthiolation of an aspartic acid residue of ribosomal protein uS12. This Ectopseudomonas mendocina (strain ymp) (Pseudomonas mendocina) protein is Ribosomal protein uS12 methylthiotransferase RimO.